A 165-amino-acid chain; its full sequence is Phosphopantetheine adenylyltransferase (165 aa).

A substrate-binding site is contributed by T9. Residues 9-10 and H17 each bind ATP; that span reads TF. K41, L73, and R87 together coordinate substrate. ATP-binding positions include 88-90, E98, and 123-129; these read GLR and LQPIASR.

Belongs to the bacterial CoaD family. In terms of assembly, homohexamer. Mg(2+) serves as cofactor.

Its subcellular location is the cytoplasm. It catalyses the reaction (R)-4'-phosphopantetheine + ATP + H(+) = 3'-dephospho-CoA + diphosphate. It functions in the pathway cofactor biosynthesis; coenzyme A biosynthesis; CoA from (R)-pantothenate: step 4/5. Functionally, reversibly transfers an adenylyl group from ATP to 4'-phosphopantetheine, yielding dephospho-CoA (dPCoA) and pyrophosphate. In Rhizorhabdus wittichii (strain DSM 6014 / CCUG 31198 / JCM 15750 / NBRC 105917 / EY 4224 / RW1) (Sphingomonas wittichii), this protein is Phosphopantetheine adenylyltransferase.